Here is a 214-residue protein sequence, read N- to C-terminus: Urease accessory protein UreF (214 aa).

The segment at Ala-70–Ala-95 is disordered. Positions Arg-83 to Ala-95 are enriched in low complexity.

It belongs to the UreF family. As to quaternary structure, ureD, UreF and UreG form a complex that acts as a GTP-hydrolysis-dependent molecular chaperone, activating the urease apoprotein by helping to assemble the nickel containing metallocenter of UreC. The UreE protein probably delivers the nickel.

It is found in the cytoplasm. Its function is as follows. Required for maturation of urease via the functional incorporation of the urease nickel metallocenter. This Mycolicibacterium vanbaalenii (strain DSM 7251 / JCM 13017 / BCRC 16820 / KCTC 9966 / NRRL B-24157 / PYR-1) (Mycobacterium vanbaalenii) protein is Urease accessory protein UreF.